Consider the following 154-residue polypeptide: UPF0260 protein NTHI1811 (154 aa).

The protein belongs to the UPF0260 family.

The sequence is that of UPF0260 protein NTHI1811 from Haemophilus influenzae (strain 86-028NP).